Consider the following 277-residue polypeptide: MKIKNWLKYASLKLKKTSSSPNLDAEILLSYVLKKCRTWIISNDFIKLTYDNLIDLNVLLQRRMNSEPISYLIHVKEFWSLPFLVSNSTLIPRPDTEILVEKALIYLKNLSNAKVLDLGTGCGSIALALASERLDCKIIGIDCVKESISIASKNAKILKLKNVSFLHSIWFSKVDNMFDMIVSNPPYLSFSEMKNVDKEVLFEPFIALFSSENGLGAIRHIIKYSKKYLYSKAWLLVEHGWKQKDKVQSFFYKYSFININTYRDYCDSDRVTVGQKQ.

S-adenosyl-L-methionine is bound by residues 119–123, Asp142, Trp170, and Asn184; that span reads GTGCG. 184-187 lines the substrate pocket; that stretch reads NPPY.

The protein belongs to the protein N5-glutamine methyltransferase family. PrmC subfamily.

It carries out the reaction L-glutaminyl-[peptide chain release factor] + S-adenosyl-L-methionine = N(5)-methyl-L-glutaminyl-[peptide chain release factor] + S-adenosyl-L-homocysteine + H(+). In terms of biological role, methylates the class 1 translation termination release factors RF1/PrfA and RF2/PrfB on the glutamine residue of the universally conserved GGQ motif. This Buchnera aphidicola subsp. Baizongia pistaciae (strain Bp) protein is Release factor glutamine methyltransferase.